Here is a 441-residue protein sequence, read N- to C-terminus: Probable carboxypeptidase NFIA_052450 (441 aa).

A signal peptide spans methionine 1–alanine 16. N-linked (GlcNAc...) asparagine glycosylation is found at asparagine 88 and asparagine 150. A Zn(2+)-binding site is contributed by aspartate 166. Glutamate 198 acts as the Proton acceptor in catalysis. Glutamate 199 is a Zn(2+) binding site. N-linked (GlcNAc...) asparagine glycans are attached at residues asparagine 354 and asparagine 373.

The protein belongs to the peptidase M20A family. Zn(2+) is required as a cofactor.

It localises to the secreted. This is Probable carboxypeptidase NFIA_052450 from Neosartorya fischeri (strain ATCC 1020 / DSM 3700 / CBS 544.65 / FGSC A1164 / JCM 1740 / NRRL 181 / WB 181) (Aspergillus fischerianus).